Here is a 2839-residue protein sequence, read N- to C-terminus: Bifunctional DNA-directed RNA polymerase subunit beta-beta' (2839 aa).

Residues 1–1433 (MVDSSYMCAS…CLNVALKQNN (1433 aa)) form a DNA-directed RNA polymerase subunit beta region. Residues 1436–2839 (IEDISHTNIA…KESVAESRYN (1404 aa)) are DNA-directed RNA polymerase subunit beta'. Zn(2+)-binding residues include cysteine 1501, cysteine 1503, cysteine 1516, and cysteine 1519. Aspartate 1893, aspartate 1895, and aspartate 1897 together coordinate Mg(2+). Zn(2+)-binding residues include cysteine 2238, cysteine 2312, cysteine 2319, and cysteine 2322.

This sequence in the N-terminal section; belongs to the RNA polymerase beta chain family. It in the C-terminal section; belongs to the RNA polymerase beta' chain family. In terms of assembly, the RNAP catalytic core consists of 2 alpha, 1 beta/beta' and 1 omega subunit. When a sigma factor is associated with the core the holoenzyme is formed, which can initiate transcription. The cofactor is Mg(2+). Zn(2+) is required as a cofactor.

It carries out the reaction RNA(n) + a ribonucleoside 5'-triphosphate = RNA(n+1) + diphosphate. In terms of biological role, DNA-dependent RNA polymerase catalyzes the transcription of DNA into RNA using the four ribonucleoside triphosphates as substrates. The chain is Bifunctional DNA-directed RNA polymerase subunit beta-beta' (rpoBC) from Wolbachia sp. subsp. Brugia malayi (strain TRS).